The sequence spans 59 residues: Anti-inflammatory peptide amregulin (59 aa).

The first 19 residues, 1–19, serve as a signal peptide directing secretion; it reads MKLHMLNMLNCLLLTVCDG.

As to expression, salivary glands.

It is found in the secreted. Its function is as follows. Anti-inflammatory peptide that may facilitate successful blood feeding of ticks and may lead to immunotolerance in its host. Inhibits the secretion of inflammatory factors in rat splenocytes, such as tumor necrosis factor-alpha (TNF), interleukin-1, interleukin-8 (CXCL8) and interferon-gamma (IFNG). In addition, shows strong free radical scavenging and antioxidant activities in vitro. In vivo, inhibits adjuvant-induced paw inflammation in mouse models. This Amblyomma variegatum (Tropical bont tick) protein is Anti-inflammatory peptide amregulin.